The chain runs to 389 residues: UDP-GlcNAc:betaGal beta-1,3-N-acetylglucosaminyltransferase 8 (389 aa).

At 1 to 7 the chain is on the cytoplasmic side; the sequence is MRCRKCQ. Residues 8–24 form a helical; Signal-anchor for type II membrane protein membrane-spanning segment; that stretch reads LCLSALLTLLGLKVYIE. Residues 25–389 lie on the Lumenal side of the membrane; it reads WTSESWLKKA…RHLWVPELQC (365 aa). The disordered stretch occupies residues 36-57; it reads PRGALPSPTPPNAEPTLPTNLS. N-linked (GlcNAc...) asparagine glycans are attached at residues Asn55 and Asn212.

This sequence belongs to the glycosyltransferase 31 family. In terms of assembly, interacts with B3GNT2; this interaction greatly increases B3GNT2 catalytic activity, independently of B3GNT8 enzymatic activity.

It localises to the golgi apparatus membrane. It participates in protein modification; protein glycosylation. In terms of biological role, beta-1,3-N-acetylglucosaminyltransferase that plays a role in the elongation of specific branch structures of multiantennary N-glycans. Has strong activity towards tetraantennary N-glycans and 2,6 triantennary glycans. In Mus musculus (Mouse), this protein is UDP-GlcNAc:betaGal beta-1,3-N-acetylglucosaminyltransferase 8.